Reading from the N-terminus, the 248-residue chain is 3-deoxy-manno-octulosonate cytidylyltransferase (248 aa).

Belongs to the KdsB family.

The protein localises to the cytoplasm. The enzyme catalyses 3-deoxy-alpha-D-manno-oct-2-ulosonate + CTP = CMP-3-deoxy-beta-D-manno-octulosonate + diphosphate. It participates in nucleotide-sugar biosynthesis; CMP-3-deoxy-D-manno-octulosonate biosynthesis; CMP-3-deoxy-D-manno-octulosonate from 3-deoxy-D-manno-octulosonate and CTP: step 1/1. The protein operates within bacterial outer membrane biogenesis; lipopolysaccharide biosynthesis. Functionally, activates KDO (a required 8-carbon sugar) for incorporation into bacterial lipopolysaccharide in Gram-negative bacteria. This Leptospira interrogans serogroup Icterohaemorrhagiae serovar copenhageni (strain Fiocruz L1-130) protein is 3-deoxy-manno-octulosonate cytidylyltransferase.